Here is a 217-residue protein sequence, read N- to C-terminus: ATP phosphoribosyltransferase (217 aa).

It belongs to the ATP phosphoribosyltransferase family. Short subfamily. In terms of assembly, heteromultimer composed of HisG and HisZ subunits.

Its subcellular location is the cytoplasm. It carries out the reaction 1-(5-phospho-beta-D-ribosyl)-ATP + diphosphate = 5-phospho-alpha-D-ribose 1-diphosphate + ATP. It functions in the pathway amino-acid biosynthesis; L-histidine biosynthesis; L-histidine from 5-phospho-alpha-D-ribose 1-diphosphate: step 1/9. Catalyzes the condensation of ATP and 5-phosphoribose 1-diphosphate to form N'-(5'-phosphoribosyl)-ATP (PR-ATP). Has a crucial role in the pathway because the rate of histidine biosynthesis seems to be controlled primarily by regulation of HisG enzymatic activity. The sequence is that of ATP phosphoribosyltransferase from Burkholderia ambifaria (strain MC40-6).